The sequence spans 259 residues: Methyltransferase sdnD (259 aa).

The protein belongs to the FkbM methyltransferase family.

It participates in antibiotic biosynthesis. In terms of biological role, methyltransferase; part of the gene cluster that mediates the biosynthesis of sordarin and hypoxysordarin, glycoside antibiotics with a unique tetracyclic diterpene aglycone structure. First, the geranylgeranyl diphosphate synthase sdnC constructs GGDP from farnesyl diphosphate and isopentenyl diphosphate. The diterpene cyclase sdnA then catalyzes the cyclization of GGDP to afford cycloaraneosene. Cycloaraneosene is then hydroxylated four times by the putative cytochrome P450 monooxygenases sdnB, sdnE, sdnF and sdnH to give a hydroxylated cycloaraneosene derivative such as cycloaraneosene-8,9,13,19-tetraol. Although the order of the hydroxylations is unclear, at least C8, C9 and C13 of the cycloaraneosene skeleton are hydroxylated before the sordaricin formation. Dehydration of the 13-hydroxy group of the hydroxylated cycloaraneosene derivative might be catalyzed by an unassigned hypothetical protein such as sdnG and sdnP to construct the cyclopentadiene moiety. The FAD-dependent oxidoreductase sdnN is proposed to catalyze the oxidation at C9 of the hydroxylated cycloaraneosene derivative and also catalyze the Baeyer-Villiger oxidation to give the lactone intermediate. The presumed lactone intermediate would be hydrolyzed to give an acrolein moiety and a carboxylate moiety. Then, [4+2]cycloaddition would occur between the acrolein moiety and the cyclopentadiene moiety to give sordaricin. SdnN might also be involved in the [4+2]cycloaddition after the hypothesized oxidation to accommodate the oxidized product and prompt the [4+2]cycloaddition. GDP-6-deoxy-D-altrose may be biosynthesized from GDP-D-mannose by the putative GDP-mannose-4,6-dehydratase sdnI and the short-chain dehydrogenase sdnK. The glycosyltransferase sdnJ catalyzes the attachment of 6-deoxy-D-altrose onto the 19-hydroxy group of sordaricin to give 4'-O-demethylsordarin. The methyltransferase sdnD would complete the biosynthesis of sordarin. Sordarin can be further modified into hypoxysordarin. The unique acyl chain at the 3'-hydroxy group of hypoxysordarin would be constructed by an iterative type I PKS sdnO and the trans-acting polyketide methyltransferase sdnL. SdnL would be responsible for the introduction of an alpha-methyl group of the polyketide chain. Alternatively, the beta-lactamase-like protein sdnR might be responsible for the cleavage and transfer of the polyketide chain from the PKS sdnO to sordarin. Two putative cytochrome P450 monooxygenases, sdnQ and sdnT, might catalyze the epoxidations of the polyketide chain to complete the biosynthesis of hypoxysordarin. Transcriptional regulators sdnM and sdnS are presumably encoded for the transcriptional regulation of the expression of the sdn gene cluster. The polypeptide is Methyltransferase sdnD (Sordaria araneosa (Pleurage araneosa)).